A 240-amino-acid polypeptide reads, in one-letter code: Putative exosome complex component RRP41 (240 aa).

Belongs to the RNase PH family. In terms of assembly, component of the RNA exosome complex.

The protein localises to the cytoplasm. The protein resides in the nucleus. It localises to the nucleolus. Its subcellular location is the nucleoplasm. In terms of biological role, non-catalytic component of the RNA exosome complex which has 3'-&gt;5' exoribonuclease activity and participates in a multitude of cellular RNA processing and degradation events. This chain is Putative exosome complex component RRP41 (exos-4.1), found in Caenorhabditis elegans.